The primary structure comprises 240 residues: Small ribosomal subunit protein uS2 (240 aa).

The protein belongs to the universal ribosomal protein uS2 family.

The sequence is that of Small ribosomal subunit protein uS2 (rpsB) from Pasteurella multocida (strain Pm70).